The sequence spans 347 residues: Globoside alpha-1,3-N-acetylgalactosaminyltransferase 1 (347 aa).

The Cytoplasmic segment spans residues 1–5; that stretch reads MRCRR. Residues 6-26 form a helical; Signal-anchor for type II membrane protein membrane-spanning segment; the sequence is LALGLGFSLLSGIALWSLWIY. Over 27–347 the chain is Lumenal; that stretch reads METWLPFSYV…LDKATSWLRS (321 aa). The N-linked (GlcNAc...) asparagine glycan is linked to Asn-108. Substrate is bound by residues 116-121, 206-208, and 228-231; these read FAVGKY, DVD, and HPGY. Mn(2+)-binding residues include Asp-206 and Asp-208. Glu-298 (nucleophile) is an active-site residue.

Belongs to the glycosyltransferase 6 family. Mn(2+) is required as a cofactor.

The protein localises to the golgi apparatus membrane. It carries out the reaction a globoside Gb4Cer (d18:1(4E)) + UDP-N-acetyl-alpha-D-galactosamine = a globoside Forssman (d18:1(4E)) + UDP + H(+). It catalyses the reaction a globoside Gb4Cer + UDP-N-acetyl-alpha-D-galactosamine = a globoside IV3GalNAc-Gb4Cer + UDP + H(+). It functions in the pathway protein modification; protein glycosylation. In terms of biological role, catalyzes the formation of Forssman glycolipid via the addition of N-acetylgalactosamine (GalNAc) in alpha-1,3-linkage to GalNAcb-1,3Gala-1,4Galb-1,4GlcCer (Gb4Cer). Forssman glycolipid (also called Forssman antigen; FG) probably serves for adherence of some pathogens such as E.coli uropathogenic strains. In Canis lupus familiaris (Dog), this protein is Globoside alpha-1,3-N-acetylgalactosaminyltransferase 1.